Reading from the N-terminus, the 686-residue chain is DNA gyrase subunit B (686 aa).

Polar residues predominate over residues 1 to 27 (MADSGNPNENNPSTDTGVNDAVSTSHG). A disordered region spans residues 1–29 (MADSGNPNENNPSTDTGVNDAVSTSHGDA). One can recognise a Toprim domain in the interval 465–579 (CEIFIVEGDS…SGHVYLSRPP (115 aa)). Mg(2+) contacts are provided by Glu-471, Asp-544, and Asp-546.

It belongs to the type II topoisomerase GyrB family. As to quaternary structure, heterotetramer, composed of two GyrA and two GyrB chains. In the heterotetramer, GyrA contains the active site tyrosine that forms a transient covalent intermediate with DNA, while GyrB binds cofactors and catalyzes ATP hydrolysis. Mg(2+) serves as cofactor. It depends on Mn(2+) as a cofactor. Requires Ca(2+) as cofactor.

The protein localises to the cytoplasm. The catalysed reaction is ATP-dependent breakage, passage and rejoining of double-stranded DNA.. A type II topoisomerase that negatively supercoils closed circular double-stranded (ds) DNA in an ATP-dependent manner to modulate DNA topology and maintain chromosomes in an underwound state. Negative supercoiling favors strand separation, and DNA replication, transcription, recombination and repair, all of which involve strand separation. Also able to catalyze the interconversion of other topological isomers of dsDNA rings, including catenanes and knotted rings. Type II topoisomerases break and join 2 DNA strands simultaneously in an ATP-dependent manner. This Streptomyces coelicolor (strain ATCC BAA-471 / A3(2) / M145) protein is DNA gyrase subunit B.